The following is a 297-amino-acid chain: Light-independent protochlorophyllide reductase iron-sulfur ATP-binding protein (297 aa).

ATP is bound by residues 41–46 (GIGKST) and lysine 70. Position 45 (serine 45) interacts with Mg(2+). Positions 126 and 160 each coordinate [4Fe-4S] cluster. Residues 211–212 (NR) and 235–237 (PDL) each bind ATP.

It belongs to the NifH/BchL/ChlL family. In terms of assembly, homodimer. Protochlorophyllide reductase is composed of three subunits; BchL, BchN and BchB. Requires [4Fe-4S] cluster as cofactor.

The catalysed reaction is chlorophyllide a + oxidized 2[4Fe-4S]-[ferredoxin] + 2 ADP + 2 phosphate = protochlorophyllide a + reduced 2[4Fe-4S]-[ferredoxin] + 2 ATP + 2 H2O. It participates in porphyrin-containing compound metabolism; bacteriochlorophyll biosynthesis (light-independent). Functionally, component of the dark-operative protochlorophyllide reductase (DPOR) that uses Mg-ATP and reduced ferredoxin to reduce ring D of protochlorophyllide (Pchlide) to form chlorophyllide a (Chlide). This reaction is light-independent. The L component serves as a unique electron donor to the NB-component of the complex, and binds Mg-ATP. The protein is Light-independent protochlorophyllide reductase iron-sulfur ATP-binding protein of Methylorubrum populi (strain ATCC BAA-705 / NCIMB 13946 / BJ001) (Methylobacterium populi).